Here is a 336-residue protein sequence, read N- to C-terminus: 3-isopropylmalate dehydrogenase (336 aa).

4 residues coordinate substrate: R87, R97, R121, and D211. The Mg(2+) site is built by D211, D235, and D239. Residue 271–283 (GSAPDIAGQGVAD) participates in NAD(+) binding.

The protein belongs to the isocitrate and isopropylmalate dehydrogenases family. LeuB type 2 subfamily. In terms of assembly, homodimer. Requires Mg(2+) as cofactor. It depends on Mn(2+) as a cofactor.

It is found in the cytoplasm. The catalysed reaction is (2R,3S)-3-isopropylmalate + NAD(+) = 4-methyl-2-oxopentanoate + CO2 + NADH. The protein operates within amino-acid biosynthesis; L-leucine biosynthesis; L-leucine from 3-methyl-2-oxobutanoate: step 3/4. Its function is as follows. Catalyzes the oxidation of 3-carboxy-2-hydroxy-4-methylpentanoate (3-isopropylmalate) to 3-carboxy-4-methyl-2-oxopentanoate. The product decarboxylates to 4-methyl-2 oxopentanoate. The polypeptide is 3-isopropylmalate dehydrogenase (Mycobacterium avium (strain 104)).